Consider the following 205-residue polypeptide: High frequency lysogenization protein HflD homolog (205 aa).

Belongs to the HflD family.

Its subcellular location is the cytoplasm. The protein resides in the cell inner membrane. The protein is High frequency lysogenization protein HflD homolog of Shewanella sp. (strain MR-4).